Here is a 281-residue protein sequence, read N- to C-terminus: Pantothenate synthetase (281 aa).

30 to 37 (MGNLHQGH) contributes to the ATP binding site. H37 (proton donor) is an active-site residue. Q61 contributes to the (R)-pantoate binding site. Q61 serves as a coordination point for beta-alanine. Position 149-152 (149-152 (GNKD)) interacts with ATP. Q155 is a binding site for (R)-pantoate. Residues I178 and 186 to 189 (MSSR) each bind ATP.

This sequence belongs to the pantothenate synthetase family. Homodimer.

The protein localises to the cytoplasm. It catalyses the reaction (R)-pantoate + beta-alanine + ATP = (R)-pantothenate + AMP + diphosphate + H(+). Its pathway is cofactor biosynthesis; (R)-pantothenate biosynthesis; (R)-pantothenate from (R)-pantoate and beta-alanine: step 1/1. Its function is as follows. Catalyzes the condensation of pantoate with beta-alanine in an ATP-dependent reaction via a pantoyl-adenylate intermediate. In Shewanella baltica (strain OS155 / ATCC BAA-1091), this protein is Pantothenate synthetase.